The sequence spans 210 residues: Pyridoxine/pyridoxamine 5'-phosphate oxidase (210 aa).

Residues 7 to 10 (RQSY) and K65 each bind substrate. FMN is bound by residues 60 to 65 (RIVLIK), 75 to 76 (FT), R81, K82, and Q104. Residues Y122, R126, and S130 each coordinate substrate. Residues 139-140 (QS) and W182 each bind FMN. 188 to 190 (RLH) is a substrate binding site. Position 192 (R192) interacts with FMN.

Belongs to the pyridoxamine 5'-phosphate oxidase family. As to quaternary structure, homodimer. Requires FMN as cofactor.

It carries out the reaction pyridoxamine 5'-phosphate + O2 + H2O = pyridoxal 5'-phosphate + H2O2 + NH4(+). The enzyme catalyses pyridoxine 5'-phosphate + O2 = pyridoxal 5'-phosphate + H2O2. The protein operates within cofactor metabolism; pyridoxal 5'-phosphate salvage; pyridoxal 5'-phosphate from pyridoxamine 5'-phosphate: step 1/1. It participates in cofactor metabolism; pyridoxal 5'-phosphate salvage; pyridoxal 5'-phosphate from pyridoxine 5'-phosphate: step 1/1. In terms of biological role, catalyzes the oxidation of either pyridoxine 5'-phosphate (PNP) or pyridoxamine 5'-phosphate (PMP) into pyridoxal 5'-phosphate (PLP). The polypeptide is Pyridoxine/pyridoxamine 5'-phosphate oxidase (Bordetella bronchiseptica (strain ATCC BAA-588 / NCTC 13252 / RB50) (Alcaligenes bronchisepticus)).